We begin with the raw amino-acid sequence, 364 residues long: F-box protein At1g59680 (364 aa).

The region spanning 2–49 is the F-box domain; that stretch reads TTMSDLSVDLVGEILSRVPLTSLSAVRCTCKSWNTLSKHQIFGKAELA.

The protein is F-box protein At1g59680 of Arabidopsis thaliana (Mouse-ear cress).